A 245-amino-acid chain; its full sequence is AP-1-like transcription factor YAP5 (245 aa).

Basic residues predominate over residues 34–47; that stretch reads LPHRAAQRRKRVHR. A disordered region spans residues 34-77; the sequence is LPHRAAQRRKRVHRLHEDYETEENDEELQKKKRQNRDAQRAYRE. The 64-residue stretch at 58 to 121 folds into the bZIP domain; that stretch reads DEELQKKKRQ…QAKESENHAL (64 aa). The tract at residues 63–82 is basic motif; that stretch reads KKKRQNRDAQRAYRERKNNK. Over residues 68 to 77 the composition is skewed to basic and acidic residues; that stretch reads NRDAQRAYRE. Positions 86-114 are leucine-zipper; sequence LEETIESLSKVVKNYETKLNRLQNELQAK.

It belongs to the bZIP family. YAP subfamily. As to quaternary structure, homodimer.

Its subcellular location is the cytoplasm. The protein localises to the nucleus. Transcription activator involved in the regulation of genes expressed in response to environmental changes and metabolic requirements. According to genome-wide promoter binding and gene expression studies it is a coregulator for the expression of ribosomal genes, while its own expression is induced by the cell cycle specific activator SBF (SWI4-SWI6). This chain is AP-1-like transcription factor YAP5 (YAP5), found in Saccharomyces cerevisiae (strain ATCC 204508 / S288c) (Baker's yeast).